A 602-amino-acid chain; its full sequence is Cholinesterase (602 aa).

The signal sequence occupies residues 1-28; the sequence is MHSKVTIICIRFLFWFLLLCMLIGKSHT. Residues asparagine 45 and asparagine 85 are each glycosylated (N-linked (GlcNAc...) (complex) asparagine). A disulfide bond links cysteine 93 and cysteine 120. Tryptophan 110 serves as a coordination point for tacrine. Asparagine 134 carries an N-linked (GlcNAc...) (complex) asparagine glycan. Position 144–145 (144–145) interacts with substrate; that stretch reads GG. Serine 226 serves as the catalytic Acyl-ester intermediate. Phosphoserine is present on serine 226. N-linked (GlcNAc...) (complex) asparagine glycosylation is found at asparagine 269 and asparagine 284. A disulfide bridge links cysteine 280 with cysteine 291. Residue glutamate 353 is the Charge relay system of the active site. N-linked (GlcNAc...) (complex) asparagine glycosylation is present at asparagine 369. Cysteine 428 and cysteine 547 are joined by a disulfide. Residue histidine 466 participates in tacrine binding. Histidine 466 (charge relay system) is an active-site residue. Asparagine 483 carries N-linked (GlcNAc...) (complex) asparagine glycosylation. N-linked (GlcNAc...) asparagine glycans are attached at residues asparagine 509, asparagine 513, and asparagine 514.

The protein belongs to the type-B carboxylesterase/lipase family. In terms of assembly, homotetramer; disulfide-linked. Dimer of dimers. In terms of processing, N-glycosylated. No other PTM detected. The major N-glycan structures are of the complex diantennary type with 1 and 2 N-acetylneuraminic acid molecules (Neu5Ac) making up approximately 33% and 47% of the total N-glycans, respectively. Only low amounts of fucosylated diantennary N-glycans are detected (approximately 2%). Triantennary N-glycans with or without fucose amount to approximately 13%, whereas 5% of the total N-glycans are of the oligomannosidic or hybrid type. Detected in blood plasma (at protein level). Present in most cells except erythrocytes.

It is found in the secreted. It carries out the reaction an acylcholine + H2O = a carboxylate + choline + H(+). With respect to regulation, inhibited by mercury. Inhibited by Tabun. Tabun forms a covalent adduct with Ser-226 that becomes irreversible upon aging. Its function is as follows. Esterase with broad substrate specificity. Contributes to the inactivation of the neurotransmitter acetylcholine. Can degrade neurotoxic organophosphate esters. The sequence is that of Cholinesterase (BCHE) from Homo sapiens (Human).